Here is a 456-residue protein sequence, read N- to C-terminus: Trigger factor (456 aa).

One can recognise a PPIase FKBP-type domain in the interval 192-277 (GDTVVIDFVG…IHEVKTKEVP (86 aa)).

Belongs to the FKBP-type PPIase family. Tig subfamily.

The protein localises to the cytoplasm. It catalyses the reaction [protein]-peptidylproline (omega=180) = [protein]-peptidylproline (omega=0). Involved in protein export. Acts as a chaperone by maintaining the newly synthesized protein in an open conformation. Functions as a peptidyl-prolyl cis-trans isomerase. In Streptococcus pyogenes serotype M4 (strain MGAS10750), this protein is Trigger factor.